We begin with the raw amino-acid sequence, 327 residues long: GMP reductase (327 aa).

Cys-176 serves as the catalytic Thioimidate intermediate. Residue 205-228 (IIADGGIRTHGDIAKSIRFGASMV) participates in NADP(+) binding.

It belongs to the IMPDH/GMPR family. GuaC type 2 subfamily.

The enzyme catalyses IMP + NH4(+) + NADP(+) = GMP + NADPH + 2 H(+). Catalyzes the irreversible NADPH-dependent deamination of GMP to IMP. It functions in the conversion of nucleobase, nucleoside and nucleotide derivatives of G to A nucleotides, and in maintaining the intracellular balance of A and G nucleotides. The polypeptide is GMP reductase (Streptococcus pyogenes serotype M5 (strain Manfredo)).